A 206-amino-acid chain; its full sequence is Guanylate kinase (206 aa).

Positions 5–183 (GNLFVVAAPS…AVFDLKTIVH (179 aa)) constitute a Guanylate kinase-like domain. 12–19 (APSGAGKS) is an ATP binding site.

Belongs to the guanylate kinase family.

It is found in the cytoplasm. The catalysed reaction is GMP + ATP = GDP + ADP. In terms of biological role, essential for recycling GMP and indirectly, cGMP. The protein is Guanylate kinase of Polaromonas sp. (strain JS666 / ATCC BAA-500).